The sequence spans 348 residues: Putative zinc metalloprotease HP_0258 (348 aa).

His16 serves as a coordination point for Zn(2+). Glu17 is a catalytic residue. His20 is a binding site for Zn(2+). Helical transmembrane passes span 43 to 63 (CFFK…GGYV), 93 to 113 (WILF…YFFL), 247 to 267 (LIMG…VGAL), 275 to 295 (MLLL…LLPI), and 324 to 344 (LWLA…FNDL). One can recognise a PDZ domain in the interval 106–175 (AILVYFFLAL…GELVLEIERN (70 aa)).

It belongs to the peptidase M50B family. It depends on Zn(2+) as a cofactor.

The protein resides in the cell inner membrane. The chain is Putative zinc metalloprotease HP_0258 from Helicobacter pylori (strain ATCC 700392 / 26695) (Campylobacter pylori).